The primary structure comprises 389 residues: Arginine biosynthesis bifunctional protein ArgJ (389 aa).

Substrate is bound by residues T150, K173, T184, E263, N384, and T389. T184 acts as the Nucleophile in catalysis.

The protein belongs to the ArgJ family. As to quaternary structure, heterotetramer of two alpha and two beta chains.

The protein resides in the cytoplasm. It catalyses the reaction N(2)-acetyl-L-ornithine + L-glutamate = N-acetyl-L-glutamate + L-ornithine. It carries out the reaction L-glutamate + acetyl-CoA = N-acetyl-L-glutamate + CoA + H(+). It functions in the pathway amino-acid biosynthesis; L-arginine biosynthesis; L-ornithine and N-acetyl-L-glutamate from L-glutamate and N(2)-acetyl-L-ornithine (cyclic): step 1/1. The protein operates within amino-acid biosynthesis; L-arginine biosynthesis; N(2)-acetyl-L-ornithine from L-glutamate: step 1/4. Its function is as follows. Catalyzes two activities which are involved in the cyclic version of arginine biosynthesis: the synthesis of N-acetylglutamate from glutamate and acetyl-CoA as the acetyl donor, and of ornithine by transacetylation between N(2)-acetylornithine and glutamate. This chain is Arginine biosynthesis bifunctional protein ArgJ, found in Deinococcus radiodurans (strain ATCC 13939 / DSM 20539 / JCM 16871 / CCUG 27074 / LMG 4051 / NBRC 15346 / NCIMB 9279 / VKM B-1422 / R1).